We begin with the raw amino-acid sequence, 633 residues long: Extracellular metalloproteinase 3 (633 aa).

The N-terminal stretch at 1-18 (MHGLLLAGLLALPMNVLA) is a signal peptide. Residues 19–246 (HPAEHHASNV…VHNVVDYVAS (228 aa)) constitute a propeptide that is removed on maturation. 2 N-linked (GlcNAc...) asparagine glycosylation sites follow: asparagine 232 and asparagine 410. Histidine 429 is a Zn(2+) binding site. Residue glutamate 430 is part of the active site. Zn(2+) is bound at residue histidine 433. N-linked (GlcNAc...) asparagine glycosylation is found at asparagine 480 and asparagine 622.

It belongs to the peptidase M36 family. Zn(2+) serves as cofactor.

Its subcellular location is the secreted. Its function is as follows. Secreted metalloproteinase that allows assimilation of proteinaceous substrates and probably acts as a virulence factor. This is Extracellular metalloproteinase 3 (MEP3) from Arthroderma gypseum (strain ATCC MYA-4604 / CBS 118893) (Microsporum gypseum).